A 55-amino-acid chain; its full sequence is Large ribosomal subunit protein bL33 (55 aa).

This sequence belongs to the bacterial ribosomal protein bL33 family.

This chain is Large ribosomal subunit protein bL33, found in Parvibaculum lavamentivorans (strain DS-1 / DSM 13023 / NCIMB 13966).